Here is a 147-residue protein sequence, read N- to C-terminus: UPF0735 ACT domain-containing protein Cthe_1377 (147 aa).

The ACT domain occupies 71–146 (TLFFTVEDYA…GVKRQEILAR (76 aa)).

It belongs to the UPF0735 family.

The chain is UPF0735 ACT domain-containing protein Cthe_1377 from Acetivibrio thermocellus (strain ATCC 27405 / DSM 1237 / JCM 9322 / NBRC 103400 / NCIMB 10682 / NRRL B-4536 / VPI 7372) (Clostridium thermocellum).